The primary structure comprises 906 residues: DNA mismatch repair protein MutS (906 aa).

656–663 contributes to the ATP binding site; the sequence is GPNMAGKS.

Belongs to the DNA mismatch repair MutS family.

Functionally, this protein is involved in the repair of mismatches in DNA. It is possible that it carries out the mismatch recognition step. This protein has a weak ATPase activity. In Rhodopseudomonas palustris (strain BisA53), this protein is DNA mismatch repair protein MutS.